Reading from the N-terminus, the 156-residue chain is Hydrogenase 3 maturation protease (156 aa).

3 residues coordinate Ni(2+): Asp-16, Asp-62, and His-90.

The protein belongs to the peptidase A31 family. In terms of assembly, monomer.

The catalysed reaction is This enzyme specifically removes a 32-amino acid peptide from the C-terminus of the precursor of the large subunit of E.coli hydrogenase 3 by cleavage at the C-terminal side of Arg-537.. Functionally, protease involved in the C-terminal processing of HycE, the large subunit of hydrogenase 3. In Escherichia coli O157:H7, this protein is Hydrogenase 3 maturation protease (hycI).